The sequence spans 344 residues: Photosystem II protein D1 (344 aa).

The next 3 helical transmembrane spans lie at 29–46 (YIGW…TATT), 118–133 (HFFI…EWEL), and 142–156 (WIAV…AATA). His118 serves as a coordination point for chlorophyll a. Residue Tyr126 coordinates pheophytin a. The [CaMn4O5] cluster site is built by Asp170 and Glu189. A helical transmembrane segment spans residues 197–218 (FHMLGVAGVFGGSLFSAMHGSL). Residue His198 participates in chlorophyll a binding. A quinone is bound by residues His215 and 264 to 265 (SF). Residue His215 participates in Fe cation binding. His272 serves as a coordination point for Fe cation. A helical membrane pass occupies residues 274–288 (FLAAWPVIGIWFTAM). [CaMn4O5] cluster-binding residues include His332, Glu333, Asp342, and Ala344.

Belongs to the reaction center PufL/M/PsbA/D family. In terms of assembly, PSII is composed of 1 copy each of membrane proteins PsbA, PsbB, PsbC, PsbD, PsbE, PsbF, PsbH, PsbI, PsbJ, PsbK, PsbL, PsbM, PsbT, PsbY, PsbZ, Psb30/Ycf12, at least 3 peripheral proteins of the oxygen-evolving complex and a large number of cofactors. It forms dimeric complexes. It depends on The D1/D2 heterodimer binds P680, chlorophylls that are the primary electron donor of PSII, and subsequent electron acceptors. It shares a non-heme iron and each subunit binds pheophytin, quinone, additional chlorophylls, carotenoids and lipids. D1 provides most of the ligands for the Mn4-Ca-O5 cluster of the oxygen-evolving complex (OEC). There is also a Cl(-1) ion associated with D1 and D2, which is required for oxygen evolution. The PSII complex binds additional chlorophylls, carotenoids and specific lipids. as a cofactor. Tyr-161 forms a radical intermediate that is referred to as redox-active TyrZ, YZ or Y-Z.

The protein resides in the plastid. The protein localises to the chloroplast thylakoid membrane. The catalysed reaction is 2 a plastoquinone + 4 hnu + 2 H2O = 2 a plastoquinol + O2. In terms of biological role, photosystem II (PSII) is a light-driven water:plastoquinone oxidoreductase that uses light energy to abstract electrons from H(2)O, generating O(2) and a proton gradient subsequently used for ATP formation. It consists of a core antenna complex that captures photons, and an electron transfer chain that converts photonic excitation into a charge separation. The D1/D2 (PsbA/PsbD) reaction center heterodimer binds P680, the primary electron donor of PSII as well as several subsequent electron acceptors. The protein is Photosystem II protein D1 of Bigelowiella natans (Pedinomonas minutissima).